Consider the following 532-residue polypeptide: 2,3-bisphosphoglycerate-independent phosphoglycerate mutase (532 aa).

Mn(2+) is bound by residues Asp-15 and Ser-65. Catalysis depends on Ser-65, which acts as the Phosphoserine intermediate. Substrate-binding positions include His-126, 156–157 (RD), Arg-188, Arg-194, 258–261 (RPDR), and Lys-331. Residues Asp-398, His-402, Asp-439, His-440, and His-457 each contribute to the Mn(2+) site.

The protein belongs to the BPG-independent phosphoglycerate mutase family. In terms of assembly, monomer. Mn(2+) serves as cofactor.

It carries out the reaction (2R)-2-phosphoglycerate = (2R)-3-phosphoglycerate. The protein operates within carbohydrate degradation; glycolysis; pyruvate from D-glyceraldehyde 3-phosphate: step 3/5. Functionally, catalyzes the interconversion of 2-phosphoglycerate and 3-phosphoglycerate. In Synechococcus elongatus (strain ATCC 33912 / PCC 7942 / FACHB-805) (Anacystis nidulans R2), this protein is 2,3-bisphosphoglycerate-independent phosphoglycerate mutase.